The following is a 550-amino-acid chain: O-phosphoserine--tRNA(Cys) ligase (550 aa).

A disordered region spans residues 1 to 32 (MRFNPQDWKEKSHTNFEGAWHDGPSVITPPGE). Substrate contacts are provided by residues 212 to 214 (HMT), 257 to 259 (SAS), 299 to 300 (YY), and Asn-342.

It belongs to the class-II aminoacyl-tRNA synthetase family. O-phosphoseryl-tRNA(Cys) synthetase subfamily. Homotetramer. Interacts with SepCysS.

The enzyme catalyses tRNA(Cys) + O-phospho-L-serine + ATP = O-phospho-L-seryl-tRNA(Cys) + AMP + diphosphate. Its function is as follows. Catalyzes the attachment of O-phosphoserine (Sep) to tRNA(Cys). This Methanoregula boonei (strain DSM 21154 / JCM 14090 / 6A8) protein is O-phosphoserine--tRNA(Cys) ligase.